Here is a 468-residue protein sequence, read N- to C-terminus: UDP-N-acetylmuramate--L-alanine ligase (468 aa).

Residue 121 to 127 (GSHGKTT) participates in ATP binding.

Belongs to the MurCDEF family.

It localises to the cytoplasm. It carries out the reaction UDP-N-acetyl-alpha-D-muramate + L-alanine + ATP = UDP-N-acetyl-alpha-D-muramoyl-L-alanine + ADP + phosphate + H(+). It participates in cell wall biogenesis; peptidoglycan biosynthesis. In terms of biological role, cell wall formation. This chain is UDP-N-acetylmuramate--L-alanine ligase, found in Borreliella afzelii (strain PKo) (Borrelia afzelii).